The chain runs to 294 residues: N-acetylmuramic acid 6-phosphate etherase (294 aa).

In terms of domain architecture, SIS spans 54-217 (VISSFQNGGR…STASMIGIGK (164 aa)). Glutamate 82 acts as the Proton donor in catalysis. Residue glutamate 113 is part of the active site.

The protein belongs to the GCKR-like family. MurNAc-6-P etherase subfamily. In terms of assembly, homodimer.

It carries out the reaction N-acetyl-D-muramate 6-phosphate + H2O = N-acetyl-D-glucosamine 6-phosphate + (R)-lactate. Its pathway is amino-sugar metabolism; N-acetylmuramate degradation. Specifically catalyzes the cleavage of the D-lactyl ether substituent of MurNAc 6-phosphate, producing GlcNAc 6-phosphate and D-lactate. The protein is N-acetylmuramic acid 6-phosphate etherase of Bacillus cytotoxicus (strain DSM 22905 / CIP 110041 / 391-98 / NVH 391-98).